Consider the following 318-residue polypeptide: 3'-5' exoribonuclease YhaM (318 aa).

In terms of domain architecture, HD spans 163 to 279; the sequence is HVVSMLDLAK…LHYIDNLDAK (117 aa).

Belongs to the YhaM family.

Shows a 3'-5' exoribonuclease activity. This Bacillus cytotoxicus (strain DSM 22905 / CIP 110041 / 391-98 / NVH 391-98) protein is 3'-5' exoribonuclease YhaM.